Here is a 500-residue protein sequence, read N- to C-terminus: Endothelial lipase (500 aa).

The first 20 residues, Met-1–Gly-20, serve as a signal peptide directing secretion. Cys-64 and Cys-77 are disulfide-bonded. Residues Asn-80 and Asn-136 are each glycosylated (N-linked (GlcNAc...) asparagine). Ser-169 (nucleophile) is an active-site residue. The active-site Charge relay system is Asp-193. An intrachain disulfide couples Cys-252 to Cys-272. His-274 (charge relay system) is an active-site residue. Intrachain disulfides connect Cys-297-Cys-316 and Cys-308-Cys-311. Residue Lys-325–Lys-337 coordinates heparin. The PLAT domain maps to Tyr-347–Lys-482. Asn-393, Asn-469, and Asn-491 each carry an N-linked (GlcNAc...) asparagine glycan. Cys-463 and Cys-483 form a disulfide bridge.

Belongs to the AB hydrolase superfamily. Lipase family. In terms of assembly, head to tail homodimer. As to expression, high level of expression in the liver, placenta, lung, thyroid, kidney, testis and in the corpus luteum of the ovary. Expressed also in coronary artery endothelial cells, umbilical vein endothelial cells and in hepatocytes and osteosarcoma cell lines. Not detected in heart, brain and muscle.

The protein localises to the secreted. It catalyses the reaction a triacylglycerol + H2O = a diacylglycerol + a fatty acid + H(+). It carries out the reaction a 1,2-diacyl-sn-glycero-3-phosphocholine + H2O = a 2-acyl-sn-glycero-3-phosphocholine + a fatty acid + H(+). The enzyme catalyses 1,2,3-tri-(9Z-octadecenoyl)-glycerol + H2O = di-(9Z)-octadecenoylglycerol + (9Z)-octadecenoate + H(+). The catalysed reaction is 1,2,3-tributanoylglycerol + H2O = dibutanoylglycerol + butanoate + H(+). It catalyses the reaction 1,2-dihexadecanoyl-sn-glycero-3-phosphocholine + H2O = hexadecanoyl-sn-glycero-3-phosphocholine + hexadecanoate + H(+). Its activity is regulated as follows. Inhibited by serum and NaCl. Functionally, exerts both phospholipase and triglyceride lipase activities. More active as a phospholipase than a triglyceride lipase. Hydrolyzes triglycerides, both with short-chain fatty acyl groups (tributyrin) and long-chain fatty acyl groups (triolein) with similar levels of activity toward both types of substrates. Hydrolyzes high density lipoproteins (HDL) more efficiently than other lipoproteins. The sequence is that of Endothelial lipase (LIPG) from Homo sapiens (Human).